An 864-amino-acid polypeptide reads, in one-letter code: Protein translocase subunit SecA (864 aa).

ATP contacts are provided by residues Q87, 105–109 (GEGKT), and D494. Positions 809–864 (AKATELRHKEQPAELSYSGGDEDGAKTPSRRNAPKVGRNDPCPCGSGKKYKKCCGA) are disordered. Residues 810–820 (KATELRHKEQP) are compositionally biased toward basic and acidic residues. Zn(2+) is bound by residues C850, C852, C861, and C862.

Belongs to the SecA family. Monomer and homodimer. Part of the essential Sec protein translocation apparatus which comprises SecA, SecYEG and auxiliary proteins SecDF-YajC and YidC. Requires Zn(2+) as cofactor.

The protein resides in the cell inner membrane. It localises to the cytoplasm. The catalysed reaction is ATP + H2O + cellular proteinSide 1 = ADP + phosphate + cellular proteinSide 2.. Its function is as follows. Part of the Sec protein translocase complex. Interacts with the SecYEG preprotein conducting channel. Has a central role in coupling the hydrolysis of ATP to the transfer of proteins into and across the cell membrane, serving as an ATP-driven molecular motor driving the stepwise translocation of polypeptide chains across the membrane. The sequence is that of Protein translocase subunit SecA from Oleidesulfovibrio alaskensis (strain ATCC BAA-1058 / DSM 17464 / G20) (Desulfovibrio alaskensis).